The sequence spans 446 residues: Mitochondrial distribution and morphology protein 12 (446 aa).

The 446-residue stretch at 1–446 (MSIDINWEAA…VYPSFWTFLV (446 aa)) folds into the SMP-LTD domain. Acidic residues predominate over residues 75–85 (DNEIGDGEVSD). 3 disordered regions span residues 75-106 (DNEI…SAAD), 126-145 (PHDV…PIRS), and 188-283 (TPLS…RVRE). Basic and acidic residues predominate over residues 126 to 138 (PHDVPIPSKEDPL). Positions 233–246 (TGNSRPSTADTLDS) are enriched in polar residues. Residues 260–274 (SSDDAHPNVLPRRDN) are compositionally biased toward basic and acidic residues.

This sequence belongs to the MDM12 family. Component of the ER-mitochondria encounter structure (ERMES) or MDM complex, composed of MMM1, MDM10, MDM12 and MDM34. An MMM1 homodimer associates with one molecule of MDM12 on each side in a pairwise head-to-tail manner, and the SMP-LTD domains of MMM1 and MDM12 generate a continuous hydrophobic tunnel for phospholipid trafficking.

Its subcellular location is the mitochondrion outer membrane. It is found in the endoplasmic reticulum membrane. Its function is as follows. Component of the ERMES/MDM complex, which serves as a molecular tether to connect the endoplasmic reticulum (ER) and mitochondria. Components of this complex are involved in the control of mitochondrial shape and protein biogenesis, and function in nonvesicular lipid trafficking between the ER and mitochondria. MDM12 is required for the interaction of the ER-resident membrane protein MMM1 and the outer mitochondrial membrane-resident beta-barrel protein MDM10. The MDM12-MMM1 subcomplex functions in the major beta-barrel assembly pathway that is responsible for biogenesis of all mitochondrial outer membrane beta-barrel proteins, and acts in a late step after the SAM complex. The MDM10-MDM12-MMM1 subcomplex further acts in the TOM40-specific pathway after the action of the MDM12-MMM1 complex. Essential for establishing and maintaining the structure of mitochondria and maintenance of mtDNA nucleoids. This chain is Mitochondrial distribution and morphology protein 12, found in Coccidioides immitis (strain RS) (Valley fever fungus).